A 115-amino-acid chain; its full sequence is C-type natriuretic peptide prohormone (115 aa).

Residues 24–49 are disordered; that stretch reads PSDELNNEAEEMSPAASLPELNADQS. An intrachain disulfide couples Cys99 to Cys115.

It belongs to the natriuretic peptide family. CNP-115 is differentially processed to produce CNP-38 and CNP-39 in the heart and CNP-22 in the brain.

It localises to the secreted. Functionally, hormone which may be vasoactive and natriuretic. Has a cGMP-stimulating activity. This is C-type natriuretic peptide prohormone from Scyliorhinus canicula (Small-spotted catshark).